Reading from the N-terminus, the 288-residue chain is Glycine--tRNA ligase alpha subunit (288 aa).

This sequence belongs to the class-II aminoacyl-tRNA synthetase family. As to quaternary structure, tetramer of two alpha and two beta subunits.

It localises to the cytoplasm. It carries out the reaction tRNA(Gly) + glycine + ATP = glycyl-tRNA(Gly) + AMP + diphosphate. This Desulfatibacillum aliphaticivorans protein is Glycine--tRNA ligase alpha subunit.